Reading from the N-terminus, the 231-residue chain is Caspase-like protein (231 aa).

It belongs to the peptidase C14A family.

In Trichoplusia ni ascovirus 2c (TnAV-2c), this protein is Caspase-like protein.